Consider the following 200-residue polypeptide: Ankyrin repeat-containing protein YAR1 (200 aa).

2 ANK repeats span residues 49–78 and 92–121; these read SDSTALHMAAANGHIETVRYILETVSRANS and TGNTALHWASLNGKLDVVKLLCDEYEADPF. The residue at position 78 (Ser78) is a Phosphoserine. The disordered stretch occupies residues 152–173; the sequence is VEPEDDEEDTQTEGKNSVQITK. The span at 153–162 shows a compositional bias: acidic residues; sequence EPEDDEEDTQ. Positions 164-173 are enriched in polar residues; that stretch reads EGKNSVQITK.

In terms of biological role, required for normal rate of cell proliferation. The chain is Ankyrin repeat-containing protein YAR1 (YAR1) from Saccharomyces cerevisiae (strain ATCC 204508 / S288c) (Baker's yeast).